Here is a 391-residue protein sequence, read N- to C-terminus: Putative neutrophil cytosol factor 1B (391 aa).

The PX domain occupies 1–126; sequence MGDTFIRHIA…DFFKVRPDDL (126 aa). 2 SH3 domains span residues 157–216 and 227–286; these read IILQ…PLDS and YAGE…KSGQ. Positions 286 to 391 are disordered; that stretch reads QDVSQAQRQI…STKRKLASAV (106 aa). Residues Ser304 and Ser305 each carry the phosphoserine modification. The segment covering 310–319 has biased composition (basic residues); it reads HSIHQRSRKR. Ser321, Ser329, Ser346, and Ser349 each carry phosphoserine.

The protein resides in the cytoplasm. Its function is as follows. May be required for activation of the latent NADPH oxidase (necessary for superoxide production). The protein is Putative neutrophil cytosol factor 1B (NCF1B) of Homo sapiens (Human).